A 272-amino-acid polypeptide reads, in one-letter code: UPF0759 protein YecE (272 aa).

This sequence belongs to the UPF0759 family.

The protein is UPF0759 protein YecE (yecE) of Escherichia coli (strain K12).